The primary structure comprises 473 residues: Kynurenine 3-monooxygenase (473 aa).

This sequence belongs to the aromatic-ring hydroxylase family. KMO subfamily. Requires FAD as cofactor.

It localises to the mitochondrion outer membrane. It carries out the reaction L-kynurenine + NADPH + O2 + H(+) = 3-hydroxy-L-kynurenine + NADP(+) + H2O. Its pathway is cofactor biosynthesis; NAD(+) biosynthesis; quinolinate from L-kynurenine: step 1/3. Its function is as follows. Catalyzes the hydroxylation of L-kynurenine (L-Kyn) to form 3-hydroxy-L-kynurenine (L-3OHKyn). Required for synthesis of quinolinic acid. The polypeptide is Kynurenine 3-monooxygenase (Debaryomyces hansenii (strain ATCC 36239 / CBS 767 / BCRC 21394 / JCM 1990 / NBRC 0083 / IGC 2968) (Yeast)).